The chain runs to 96 residues: UPF0251 protein Ssed_3913 (96 aa).

It belongs to the UPF0251 family.

The sequence is that of UPF0251 protein Ssed_3913 from Shewanella sediminis (strain HAW-EB3).